We begin with the raw amino-acid sequence, 76 residues long: Exodeoxyribonuclease 7 small subunit (76 aa).

Belongs to the XseB family. As to quaternary structure, heterooligomer composed of large and small subunits.

The protein resides in the cytoplasm. It carries out the reaction Exonucleolytic cleavage in either 5'- to 3'- or 3'- to 5'-direction to yield nucleoside 5'-phosphates.. Functionally, bidirectionally degrades single-stranded DNA into large acid-insoluble oligonucleotides, which are then degraded further into small acid-soluble oligonucleotides. In Bacillus cereus (strain G9842), this protein is Exodeoxyribonuclease 7 small subunit.